Reading from the N-terminus, the 205-residue chain is N-(5'-phosphoribosyl)anthranilate isomerase (205 aa).

It belongs to the TrpF family.

It carries out the reaction N-(5-phospho-beta-D-ribosyl)anthranilate = 1-(2-carboxyphenylamino)-1-deoxy-D-ribulose 5-phosphate. It functions in the pathway amino-acid biosynthesis; L-tryptophan biosynthesis; L-tryptophan from chorismate: step 3/5. The polypeptide is N-(5'-phosphoribosyl)anthranilate isomerase (Thiobacillus denitrificans (strain ATCC 25259 / T1)).